A 270-amino-acid chain; its full sequence is dTDP-6-deoxy-L-talose 4-dehydrogenase (NAD(+)) (270 aa).

NAD(+) is bound by residues 11–12 (YI), 50–51 (DI), 72–76 (LAWQA), Asn-87, Thr-112, Tyr-135, and Lys-139. Residues Thr-112 and Tyr-135 each coordinate substrate. The active-site Proton acceptor is Tyr-135.

It belongs to the NAD(P)-dependent epimerase/dehydratase family.

The catalysed reaction is dTDP-6-deoxy-beta-L-talose + NAD(+) = dTDP-4-dehydro-beta-L-rhamnose + NADH + H(+). Its pathway is bacterial outer membrane biogenesis; LPS O-antigen biosynthesis. In terms of biological role, catalyzes the reduction of dTDP-6-deoxy-L-lyxo-4-hexulose to dTDP-6-deoxy-L-talose. The protein is dTDP-6-deoxy-L-talose 4-dehydrogenase (NAD(+)) (tll) of Aggregatibacter actinomycetemcomitans (Actinobacillus actinomycetemcomitans).